Reading from the N-terminus, the 99-residue chain is U1-theraphotoxin-Lsp1a (99 aa).

A signal peptide spans Met-1–Ala-23. A propeptide spanning residues Ala-24–Arg-50 is cleaved from the precursor. 4 disulfide bridges follow: Cys-54–Cys-67, Cys-58–Cys-91, Cys-72–Cys-74, and Cys-85–Cys-96.

The protein belongs to the neurotoxin 12 (Hwtx-2) family. 04 (lasiotoxin) subfamily. Expressed by the venom gland.

It localises to the secreted. Functionally, toxin that causes irreversible contractile paralysis into adult Aedes aegypti resulting in 100% mortality after 24 hours. The sequence is that of U1-theraphotoxin-Lsp1a from Lasiodora sp. (strain IBSP 8539) (Brazilian salmon pink birdeater).